We begin with the raw amino-acid sequence, 321 residues long: Polygalacturonan/rhamnogalacturonan transport system permease protein YteP (321 aa).

One can recognise an ABC transmembrane type-1 domain in the interval 1-144 (MKTAEAQAPA…YIPHFMSWVI (144 aa)). 3 helical membrane passes run 21 to 41 (RKRL…ILPG), 63 to 83 (YQPF…FIRL), and 123 to 143 (IALF…MSWV).

The protein belongs to the binding-protein-dependent transport system permease family. The complex is probably composed of two ATP-binding proteins (MsmX), two transmembrane proteins (YtcP and YteP) and a solute-binding protein (YtcQ).

It localises to the cell membrane. In terms of biological role, involved in pectin degradation. Part of the ABC transporter complex YtcQP-YteP involved in the uptake of polygalacturonan and rhamnogalacturonan type I. Responsible for the translocation of the substrate across the membrane. The chain is Polygalacturonan/rhamnogalacturonan transport system permease protein YteP (yteP) from Bacillus subtilis (strain 168).